We begin with the raw amino-acid sequence, 283 residues long: Bifunctional protein FolD (283 aa).

Residues G165 to S167 and S190 each bind NADP(+).

The protein belongs to the tetrahydrofolate dehydrogenase/cyclohydrolase family. As to quaternary structure, homodimer.

The catalysed reaction is (6R)-5,10-methylene-5,6,7,8-tetrahydrofolate + NADP(+) = (6R)-5,10-methenyltetrahydrofolate + NADPH. The enzyme catalyses (6R)-5,10-methenyltetrahydrofolate + H2O = (6R)-10-formyltetrahydrofolate + H(+). Its pathway is one-carbon metabolism; tetrahydrofolate interconversion. Its function is as follows. Catalyzes the oxidation of 5,10-methylenetetrahydrofolate to 5,10-methenyltetrahydrofolate and then the hydrolysis of 5,10-methenyltetrahydrofolate to 10-formyltetrahydrofolate. In Cupriavidus pinatubonensis (strain JMP 134 / LMG 1197) (Cupriavidus necator (strain JMP 134)), this protein is Bifunctional protein FolD.